The primary structure comprises 376 residues: uncharacterized protein (376 aa).

Composition is skewed to low complexity over residues Asn-73 to Asn-99 and Ser-228 to Ser-243. 2 disordered regions span residues Asn-73 to Leu-100 and Glu-222 to Asp-269.

This is an uncharacterized protein from Saccharomyces cerevisiae (strain ATCC 204508 / S288c) (Baker's yeast).